The following is a 573-amino-acid chain: Anti-Muellerian hormone type-2 receptor (573 aa).

A signal peptide spans 1 to 17; it reads MLGSLGLWALLPTAVEA. Residues 18–149 lie on the Extracellular side of the membrane; the sequence is PPNRRTCVFF…APGESIWMAL (132 aa). Disulfide bonds link Cys-55–Cys-79 and Cys-92–Cys-109. A glycan (N-linked (GlcNAc...) asparagine) is linked at Asn-66. Asn-119 carries an N-linked (GlcNAc...) asparagine glycan. Residues 150–170 traverse the membrane as a helical segment; that stretch reads VLLGLFLLLLLLLGSIILALL. Residues 171–573 are Cytoplasmic-facing; sequence QRKNYRVRGE…PQPACTLSPV (403 aa). Residues 203–518 enclose the Protein kinase domain; it reads LCFSQVIREG…AHPQESHPFP (316 aa). ATP contacts are provided by residues 209-217 and Lys-230; that span reads IREGGHAVV. Asp-333 (proton acceptor) is an active-site residue.

Belongs to the protein kinase superfamily. TKL Ser/Thr protein kinase family. TGFB receptor subfamily. Interacts with type I receptor ACVR1. Mg(2+) serves as cofactor. It depends on Mn(2+) as a cofactor.

It localises to the membrane. It catalyses the reaction L-threonyl-[receptor-protein] + ATP = O-phospho-L-threonyl-[receptor-protein] + ADP + H(+). The catalysed reaction is L-seryl-[receptor-protein] + ATP = O-phospho-L-seryl-[receptor-protein] + ADP + H(+). Functionally, on ligand binding, forms a receptor complex consisting of two type II and two type I transmembrane serine/threonine kinases. Type II receptors phosphorylate and activate type I receptors which autophosphorylate, then bind and activate SMAD transcriptional regulators. Receptor for anti-Muellerian hormone. This Homo sapiens (Human) protein is Anti-Muellerian hormone type-2 receptor (AMHR2).